A 303-amino-acid chain; its full sequence is Nitrogenase iron protein (303 aa).

11–18 (GKGGIGKS) serves as a coordination point for ATP. Cysteine 112 contributes to the [4Fe-4S] cluster binding site. Position 115 is an ADP-ribosylarginine; by dinitrogenase reductase ADP-ribosyltransferase (arginine 115). Cysteine 147 is a binding site for [4Fe-4S] cluster.

This sequence belongs to the NifH/BchL/ChlL family. As to quaternary structure, homodimer. [4Fe-4S] cluster serves as cofactor. The reversible ADP-ribosylation of Arg-115 inactivates the nitrogenase reductase and regulates nitrogenase activity.

It carries out the reaction N2 + 8 reduced [2Fe-2S]-[ferredoxin] + 16 ATP + 16 H2O = H2 + 8 oxidized [2Fe-2S]-[ferredoxin] + 2 NH4(+) + 16 ADP + 16 phosphate + 6 H(+). The key enzymatic reactions in nitrogen fixation are catalyzed by the nitrogenase complex, which has 2 components: the iron protein and the molybdenum-iron protein. The sequence is that of Nitrogenase iron protein from Wolinella succinogenes (strain ATCC 29543 / DSM 1740 / CCUG 13145 / JCM 31913 / LMG 7466 / NCTC 11488 / FDC 602W) (Vibrio succinogenes).